The primary structure comprises 562 residues: Solute carrier family 40 member 1 (562 aa).

Over 1-20 the chain is Cytoplasmic; that stretch reads MDSPASKKPRCERFREFFKS. Residues 21-50 form a helical membrane-spanning segment; the sequence is AKFLIYVGHALSTWGDRMWNFAVAVFLVEL. Residue Asp-36 coordinates Fe cation. The Extracellular portion of the chain corresponds to 51–54; it reads YGNS. The helical transmembrane segment at 55–81 threads the bilayer; it reads LLLTAVYGLVVAGSVLLLGAIIGDWVD. Topologically, residues 82 to 84 are cytoplasmic; the sequence is KNP. The chain crosses the membrane as a helical span at residues 85-115; the sequence is RLKVAQTSLVVQNSAVILCGALLMAVFQFKQ. Residues 116–123 lie on the Extracellular side of the membrane; it reads QLSSMYDG. The chain crosses the membrane as a helical span at residues 124 to 159; it reads WLLTTCYIMVISIANIANLASTAMSITIQRDWVVVV. Topologically, residues 160–161 are cytoplasmic; sequence AG. The helical transmembrane segment at 162-192 threads the bilayer; sequence DDRSKLADMNATVRIIDQLTNILAPMLVGQI. Over 193 to 199 the chain is Extracellular; that stretch reads MAFGSHF. A helical membrane pass occupies residues 200 to 226; sequence IGCGFISGWNLFSMCLEYFLLWKVYQK. The Cytoplasmic portion of the chain corresponds to 227–300; that stretch reads TPALAFKAGQ…DGWVAYYNQS (74 aa). The helical transmembrane segment at 301-327 threads the bilayer; that stretch reads IFFAGMSLAFLYMTVLGFDCITTGYAY. Cys-320 serves as a coordination point for Fe cation. Topologically, residues 328 to 332 are extracellular; that stretch reads TQGLN. Residues 333 to 360 traverse the membrane as a helical segment; the sequence is GSVLSLLMGASAVSGICGTVAFTWIRKK. The Cytoplasmic portion of the chain corresponds to 361–362; sequence CG. Residues 363 to 385 form a helical membrane-spanning segment; that stretch reads LIRTGFIAGVTQLSCLTLCVASV. The Extracellular segment spans residues 386–444; it reads FAPGSPFDLSVSPFEEVLRHLFGDSGSLRESPTFIPTTEPPIQANVTVFEEAPPVESYM. The helical transmembrane segment at 445-474 threads the bilayer; sequence SVGLLFAGVIAARVGLWSFDLTVTQLIQEN. Over 475 to 479 the chain is Cytoplasmic; it reads VIESE. The chain crosses the membrane as a helical span at residues 480–504; it reads RGVINGVQNSMNYLLDLLHFIMVIL. His-498 contacts Fe cation. Residues 505–507 lie on the Extracellular side of the membrane; the sequence is APN. The helical transmembrane segment at 508-533 threads the bilayer; the sequence is PEAFGLLVIISVSFVAMGHMMYFRFA. Over 534–562 the chain is Cytoplasmic; the sequence is YKSLGSRLFLFCSPEQKPDPNIPSLPNSV.

The protein belongs to the ferroportin (FP) (TC 2.A.100) family. SLC40A subfamily. In terms of tissue distribution, expressed in the yolk sac and placenta.

Its subcellular location is the cell membrane. The protein localises to the basolateral cell membrane. The catalysed reaction is Fe(2+)(in) = Fe(2+)(out). Functionally, transports Fe(2+) from the inside of a cell to the outside of the cell, playing a key role for maintaining systemic iron homeostasis. May be involved in transfer of Fe(2+) between maternal and fetal circulation. This chain is Solute carrier family 40 member 1 (slc40a1), found in Danio rerio (Zebrafish).